The chain runs to 97 residues: Aspartyl/glutamyl-tRNA(Asn/Gln) amidotransferase subunit C (97 aa).

Belongs to the GatC family. As to quaternary structure, heterotrimer of A, B and C subunits.

The catalysed reaction is L-glutamyl-tRNA(Gln) + L-glutamine + ATP + H2O = L-glutaminyl-tRNA(Gln) + L-glutamate + ADP + phosphate + H(+). The enzyme catalyses L-aspartyl-tRNA(Asn) + L-glutamine + ATP + H2O = L-asparaginyl-tRNA(Asn) + L-glutamate + ADP + phosphate + 2 H(+). In terms of biological role, allows the formation of correctly charged Asn-tRNA(Asn) or Gln-tRNA(Gln) through the transamidation of misacylated Asp-tRNA(Asn) or Glu-tRNA(Gln) in organisms which lack either or both of asparaginyl-tRNA or glutaminyl-tRNA synthetases. The reaction takes place in the presence of glutamine and ATP through an activated phospho-Asp-tRNA(Asn) or phospho-Glu-tRNA(Gln). The chain is Aspartyl/glutamyl-tRNA(Asn/Gln) amidotransferase subunit C from Nostoc punctiforme (strain ATCC 29133 / PCC 73102).